Consider the following 187-residue polypeptide: dCTP deaminase (187 aa).

Residues 110–115 (KSTYAR), 134–136 (TLE), Gln-155, Tyr-169, and Gln-179 contribute to the dCTP site. Glu-136 functions as the Proton donor/acceptor in the catalytic mechanism.

It belongs to the dCTP deaminase family. Homotrimer.

The enzyme catalyses dCTP + H2O + H(+) = dUTP + NH4(+). It functions in the pathway pyrimidine metabolism; dUMP biosynthesis; dUMP from dCTP (dUTP route): step 1/2. Functionally, catalyzes the deamination of dCTP to dUTP. The polypeptide is dCTP deaminase (Bordetella petrii (strain ATCC BAA-461 / DSM 12804 / CCUG 43448)).